Reading from the N-terminus, the 265-residue chain is tRNA pseudouridine synthase A (265 aa).

Catalysis depends on D53, which acts as the Nucleophile. Y111 is a substrate binding site.

This sequence belongs to the tRNA pseudouridine synthase TruA family. Homodimer.

It catalyses the reaction uridine(38/39/40) in tRNA = pseudouridine(38/39/40) in tRNA. Functionally, formation of pseudouridine at positions 38, 39 and 40 in the anticodon stem and loop of transfer RNAs. The sequence is that of tRNA pseudouridine synthase A from Acinetobacter baumannii (strain ATCC 17978 / DSM 105126 / CIP 53.77 / LMG 1025 / NCDC KC755 / 5377).